Here is a 235-residue protein sequence, read N- to C-terminus: Large ribosomal subunit protein uL1 (235 aa).

This sequence belongs to the universal ribosomal protein uL1 family. Part of the 50S ribosomal subunit.

In terms of biological role, binds directly to 23S rRNA. The L1 stalk is quite mobile in the ribosome, and is involved in E site tRNA release. Functionally, protein L1 is also a translational repressor protein, it controls the translation of the L11 operon by binding to its mRNA. This is Large ribosomal subunit protein uL1 from Fusobacterium nucleatum subsp. nucleatum (strain ATCC 25586 / DSM 15643 / BCRC 10681 / CIP 101130 / JCM 8532 / KCTC 2640 / LMG 13131 / VPI 4355).